The chain runs to 1010 residues: Probable LRR receptor-like serine/threonine-protein kinase At3g47570 (1010 aa).

Positions 1 to 19 (MRLFLLLAFNALMLLETHG) are cleaved as a signal peptide. Residues 20–645 (FTDETDRQAL…SSRLKKVVIG (626 aa)) are Extracellular-facing. Asparagine 48 and asparagine 88 each carry an N-linked (GlcNAc...) asparagine glycan. LRR repeat units follow at residues 89 to 113 (LSFL…VGQL), 114 to 137 (SRLE…LYNC), 139 to 161 (RLLN…LGSL), 162 to 185 (TNLV…LGNL), 186 to 209 (TLLE…VAQL), 211 to 233 (QIWS…LYNL), 234 to 258 (SSLK…GILL), 259 to 282 (PNLL…LSNI), 283 to 307 (STLE…NVPN), and 310 to 333 (LLFL…TSLT). An N-linked (GlcNAc...) asparagine glycan is attached at asparagine 136. The N-linked (GlcNAc...) asparagine glycan is linked to asparagine 184. N-linked (GlcNAc...) asparagine glycans are attached at residues asparagine 221 and asparagine 232. Asparagine 281 and asparagine 294 each carry an N-linked (GlcNAc...) asparagine glycan. Asparagine 334 and asparagine 358 each carry an N-linked (GlcNAc...) asparagine glycan. LRR repeat units lie at residues 335–359 (CTQL…IANL), 361–384 (AKLV…IGNL), 385–408 (INLQ…LGKL), 410–432 (NLRY…IGNM), 433–455 (TMLE…SLGN), 457–480 (SHLL…IMKI), 481–504 (QQLL…IGAL), 505–528 (QNLG…LGNC), 530–551 (TMES…LKGL), 552–574 (VGVK…YFAS), and 575–600 (FSKL…IFEN). Asparagine 431, asparagine 455, and asparagine 470 each carry an N-linked (GlcNAc...) asparagine glycan. 2 N-linked (GlcNAc...) asparagine glycosylation sites follow: asparagine 582 and asparagine 600. The chain crosses the membrane as a helical span at residues 646-666 (VSVGITLLLLLFMASVTLIWL). The Cytoplasmic segment spans residues 667 to 1010 (RKRKKNKETN…FFKASRTTWR (344 aa)). Position 699 is a phosphothreonine (threonine 699). The region spanning 702–1002 (FSSSNMVGSG…ELISIRERFF (301 aa)) is the Protein kinase domain. ATP-binding positions include 708 to 716 (VGSGSFGTV) and lysine 731. Phosphotyrosine is present on residues tyrosine 781 and tyrosine 826. The active-site Proton acceptor is the aspartate 839. Phosphotyrosine is present on tyrosine 887.

Belongs to the protein kinase superfamily. Ser/Thr protein kinase family.

The protein localises to the cell membrane. The catalysed reaction is L-seryl-[protein] + ATP = O-phospho-L-seryl-[protein] + ADP + H(+). It carries out the reaction L-threonyl-[protein] + ATP = O-phospho-L-threonyl-[protein] + ADP + H(+). The chain is Probable LRR receptor-like serine/threonine-protein kinase At3g47570 from Arabidopsis thaliana (Mouse-ear cress).